Here is a 440-residue protein sequence, read N- to C-terminus: 23S rRNA (uracil(1939)-C(5))-methyltransferase RlmD (440 aa).

A TRAM domain is found at 11 to 69 (STLDTKHQPVTIERLDHQGSGLAFLHKKPLFVDGALPGEEVLIQLTENKSKYARGQLIK). Positions 82, 88, 91, and 169 each coordinate [4Fe-4S] cluster. S-adenosyl-L-methionine contacts are provided by Gln272, Phe301, Asn306, Glu322, Asn349, and Asp370. Cys396 serves as the catalytic Nucleophile.

The protein belongs to the class I-like SAM-binding methyltransferase superfamily. RNA M5U methyltransferase family. RlmD subfamily.

The enzyme catalyses uridine(1939) in 23S rRNA + S-adenosyl-L-methionine = 5-methyluridine(1939) in 23S rRNA + S-adenosyl-L-homocysteine + H(+). In terms of biological role, catalyzes the formation of 5-methyl-uridine at position 1939 (m5U1939) in 23S rRNA. The protein is 23S rRNA (uracil(1939)-C(5))-methyltransferase RlmD of Vibrio cholerae serotype O1 (strain ATCC 39541 / Classical Ogawa 395 / O395).